A 531-amino-acid polypeptide reads, in one-letter code: MFSLQNLCRKTLPDCKLPEFFDEYILQLLGLYWENHGTIQRAGNNCVLVQQHTLIPVNEALRIAASEENYEIVSLLLAWEGNLYYAIIGALEGNRHDLIRKYDDQIKDHHEILPFIDNPVIFHKCHIMRRCFFDCILYQAVKYSKFRVLLYFKYRLENDLPLAHLLVEKACEDHNYEVIKWLYENLHIYNIMETFECAIAHKDLRLYRLGYTFIYNRIVPYKYHYLDVLILSGLHLLYKVAAKGYLDFILETLKYDHNNDNLDIILTQAVTYNHRKILTYYIPQLTYAQIEQCLFMAIKKKSSKKTLNLLLSHLKLSIKLIKKISQYVATYNSTNIIGILNMKRKKKIYLDIILTKFVKYAIFNKYVVRCMDTFSINPERIIKMAARINKMLLVKKISQHAWKNHAARLKHLKHAVYTMKHKDGKNRLMNLIYDHYYYHMQGEEIFSLARFYAIHHAPKLFDVFYDCCLLDTIRFKSLLLDCSHIIGKNAHDATNITIVNKYIGNLFAMGVLSKKEILQDYPSIYSKHYMP.

It belongs to the asfivirus MGF 505 family.

Its function is as follows. Plays a role in virus cell tropism, and may be required for efficient virus replication in macrophages. The polypeptide is Protein MGF 505-1R (Ornithodoros (relapsing fever ticks)).